Consider the following 1158-residue polypeptide: ATP-dependent helicase/deoxyribonuclease subunit B (1158 aa).

It belongs to the helicase family. AddB/RexB type 2 subfamily. As to quaternary structure, heterodimer of AddA and RexB. It depends on Mg(2+) as a cofactor.

Functionally, the heterodimer acts as both an ATP-dependent DNA helicase and an ATP-dependent, dual-direction single-stranded exonuclease. Recognizes the chi site generating a DNA molecule suitable for the initiation of homologous recombination. This subunit has 5' -&gt; 3' nuclease activity but not helicase activity. The polypeptide is ATP-dependent helicase/deoxyribonuclease subunit B (Lactobacillus gasseri (strain ATCC 33323 / DSM 20243 / BCRC 14619 / CIP 102991 / JCM 1131 / KCTC 3163 / NCIMB 11718 / NCTC 13722 / AM63)).